Consider the following 405-residue polypeptide: Aspartokinase (405 aa).

ATP is bound at residue 7-10 (KYGG). 25–30 (RIAHYR) contacts substrate. ATP is bound at residue Ser41. Residues 47-49 (TDE), Glu74, 125-126 (LE), 150-153 (RGGS), and Ser153 contribute to the substrate site. ATP-binding positions include 173–174 (TD), 179–184 (YTTDPH), and Arg209. ACT domains lie at 263-342 (IGLI…IAKV) and 344-405 (IVGV…LDKA). Substrate-binding positions include Asp270, 288-290 (AVD), Gln294, 355-356 (VP), 369-370 (NI), and 376-377 (SE).

Belongs to the aspartokinase family. In terms of assembly, tetramer consisting of 2 isoforms Alpha (catalytic and regulation) and of a homodimer of 2 isoforms Beta (regulation).

The enzyme catalyses L-aspartate + ATP = 4-phospho-L-aspartate + ADP. It participates in amino-acid biosynthesis; L-lysine biosynthesis via DAP pathway; (S)-tetrahydrodipicolinate from L-aspartate: step 1/4. It functions in the pathway amino-acid biosynthesis; L-methionine biosynthesis via de novo pathway; L-homoserine from L-aspartate: step 1/3. Its pathway is amino-acid biosynthesis; L-threonine biosynthesis; L-threonine from L-aspartate: step 1/5. Catalyzes the phosphorylation of the beta-carboxyl group of aspartic acid with ATP to yield 4-phospho-L-aspartate, which is involved in the branched biosynthetic pathway leading to the biosynthesis of amino acids lysine, threonine, isoleucine and methionine. The sequence is that of Aspartokinase (ask) from Thermus thermophilus (strain ATCC BAA-163 / DSM 7039 / HB27).